Consider the following 465-residue polypeptide: UDP-N-acetylmuramate--L-alanine ligase (465 aa).

112-118 (GTHGKTT) is a binding site for ATP.

It belongs to the MurCDEF family.

Its subcellular location is the cytoplasm. It carries out the reaction UDP-N-acetyl-alpha-D-muramate + L-alanine + ATP = UDP-N-acetyl-alpha-D-muramoyl-L-alanine + ADP + phosphate + H(+). It functions in the pathway cell wall biogenesis; peptidoglycan biosynthesis. Cell wall formation. The protein is UDP-N-acetylmuramate--L-alanine ligase of Burkholderia lata (strain ATCC 17760 / DSM 23089 / LMG 22485 / NCIMB 9086 / R18194 / 383).